We begin with the raw amino-acid sequence, 181 residues long: Translation initiation factor IF-3, chloroplastic (181 aa).

It belongs to the IF-3 family. In terms of assembly, monomer.

It localises to the plastid. The protein resides in the chloroplast. In terms of biological role, IF-3 binds to the 30S ribosomal subunit and shifts the equilibrium between 70S ribosomes and their 50S and 30S subunits in favor of the free subunits, thus enhancing the availability of 30S subunits on which protein synthesis initiation begins. The polypeptide is Translation initiation factor IF-3, chloroplastic (Galdieria sulphuraria (Red alga)).